Reading from the N-terminus, the 401-residue chain is Glucose/mannose transporter GlcP (401 aa).

The next 12 helical transmembrane spans lie at 11–31 (AFFFTVGIIHISTGSLTPFLL), 43–63 (VIIFFQFTGFLSGVLIAPLMI), 78–98 (IMLVALSIFFLTKDWYYIIVM), 99–119 (AFLLGYGAGTLETTVGSFVIA), 132–152 (EVLFGLGALSFPLLINSFIDI), 156–176 (FLPYYCIFTFLFVLFVGWLIF), 212–232 (LGFFVFFAFLYAGIETNFANF), 247–267 (LISVSFFWVGIIIGRILIGFV), 278–298 (LFSCSCLIVLLIAFSYISNPI), 306–326 (LIGLSIAGIFPIALTLASIII), 336–356 (LFIASASFGGAIISFLIGWSL), and 360–380 (TILLTMGIFTTMAVILVGISV).

Belongs to the major facilitator superfamily.

The protein resides in the cell membrane. Its function is as follows. Can transport glucose, mannose, 2-deoxyglucose and methyl alpha-glucoside, but not galactose. The polypeptide is Glucose/mannose transporter GlcP (glcP) (Bacillus subtilis (strain 168)).